The chain runs to 206 residues: MVKIIGIAGGSGSGKTTIVNKISEVIPEFVLISQDNYYKSVGDYEYEFLDVNFDHPDAFDNNLFYKQLKKIKENKLIHMPLYDFINHRRKDETVEIVPTPVVIVEGIMIFVEERVRNLIDLKIYIDTPNDIRFIRRLERDMSKRGRTLESVIEQYLSTTRAGYYRFIEPTKEYADLIIPEGGHNDKALYVLSSFLRTLGKEGADFF.

9–16 (GGSGSGKT) serves as a coordination point for ATP.

The protein belongs to the uridine kinase family.

Its subcellular location is the cytoplasm. The enzyme catalyses uridine + ATP = UMP + ADP + H(+). It catalyses the reaction cytidine + ATP = CMP + ADP + H(+). It functions in the pathway pyrimidine metabolism; CTP biosynthesis via salvage pathway; CTP from cytidine: step 1/3. Its pathway is pyrimidine metabolism; UMP biosynthesis via salvage pathway; UMP from uridine: step 1/1. In Borrelia hermsii (strain HS1 / DAH), this protein is Uridine kinase.